A 99-amino-acid chain; its full sequence is Malonate decarboxylase acyl carrier protein (99 aa).

S25 is subject to O-(phosphoribosyl dephospho-coenzyme A)serine.

It belongs to the MdcC family. Covalently binds the prosthetic group of malonate decarboxylase.

It localises to the cytoplasm. Functionally, subunit of malonate decarboxylase, it is an acyl carrier protein to which acetyl and malonyl thioester residues are bound via a 2'-(5''-phosphoribosyl)-3'-dephospho-CoA prosthetic group and turn over during the catalytic mechanism. This Pseudomonas aeruginosa (strain LESB58) protein is Malonate decarboxylase acyl carrier protein.